Reading from the N-terminus, the 235-residue chain is Small ribosomal subunit protein eS4 (235 aa).

The region spanning 37 to 100 is the S4 RNA-binding domain; it reads LPLGIIIRDI…NEAYRMLQDE (64 aa).

The protein belongs to the eukaryotic ribosomal protein eS4 family.

This Methanosarcina acetivorans (strain ATCC 35395 / DSM 2834 / JCM 12185 / C2A) protein is Small ribosomal subunit protein eS4.